Reading from the N-terminus, the 259-residue chain is Thiazole synthase (259 aa).

Residue Lys-99 is the Schiff-base intermediate with DXP of the active site. 1-deoxy-D-xylulose 5-phosphate-binding positions include Gly-161, 187–188 (AG), and 209–210 (NT).

This sequence belongs to the ThiG family. In terms of assembly, homotetramer. Forms heterodimers with either ThiH or ThiS.

The protein localises to the cytoplasm. It carries out the reaction [ThiS sulfur-carrier protein]-C-terminal-Gly-aminoethanethioate + 2-iminoacetate + 1-deoxy-D-xylulose 5-phosphate = [ThiS sulfur-carrier protein]-C-terminal Gly-Gly + 2-[(2R,5Z)-2-carboxy-4-methylthiazol-5(2H)-ylidene]ethyl phosphate + 2 H2O + H(+). It functions in the pathway cofactor biosynthesis; thiamine diphosphate biosynthesis. Its function is as follows. Catalyzes the rearrangement of 1-deoxy-D-xylulose 5-phosphate (DXP) to produce the thiazole phosphate moiety of thiamine. Sulfur is provided by the thiocarboxylate moiety of the carrier protein ThiS. In vitro, sulfur can be provided by H(2)S. The chain is Thiazole synthase from Sulfurimonas denitrificans (strain ATCC 33889 / DSM 1251) (Thiomicrospira denitrificans (strain ATCC 33889 / DSM 1251)).